The chain runs to 201 residues: Small ribosomal subunit protein uS2 (201 aa).

This sequence belongs to the universal ribosomal protein uS2 family.

This is Small ribosomal subunit protein uS2 from Nanoarchaeum equitans (strain Kin4-M).